The primary structure comprises 140 residues: Nucleoside diphosphate kinase (140 aa).

The ATP site is built by K11, F59, R87, T93, R104, and N114. H117 functions as the Pros-phosphohistidine intermediate in the catalytic mechanism.

It belongs to the NDK family. In terms of assembly, homotetramer. Mg(2+) is required as a cofactor.

It localises to the cytoplasm. It catalyses the reaction a 2'-deoxyribonucleoside 5'-diphosphate + ATP = a 2'-deoxyribonucleoside 5'-triphosphate + ADP. The enzyme catalyses a ribonucleoside 5'-diphosphate + ATP = a ribonucleoside 5'-triphosphate + ADP. Its function is as follows. Major role in the synthesis of nucleoside triphosphates other than ATP. The ATP gamma phosphate is transferred to the NDP beta phosphate via a ping-pong mechanism, using a phosphorylated active-site intermediate. The polypeptide is Nucleoside diphosphate kinase (Rickettsia prowazekii (strain Madrid E)).